The following is a 129-amino-acid chain: Sigma factor-binding protein Crl (129 aa).

Positions 99 to 119 are essential for activity; it reads TQNCFHLKLVKTLEENFQLSV.

Belongs to the Crl family.

The protein resides in the cytoplasm. Functionally, binds to the sigma-S subunit of RNA polymerase, activating expression of sigma-S-regulated genes. Stimulates RNA polymerase holoenzyme formation and may bind to several other sigma factors, such as sigma-70 and sigma-32. This Vibrio vulnificus (strain CMCP6) protein is Sigma factor-binding protein Crl.